Reading from the N-terminus, the 202-residue chain is LexA repressor (202 aa).

A DNA-binding region (H-T-H motif) is located at residues 28–48; that stretch reads RAEIAMRLGFRSPNAAEEHLK. Residues Ser-119 and Lys-156 each act as for autocatalytic cleavage activity in the active site.

Belongs to the peptidase S24 family. In terms of assembly, homodimer.

It catalyses the reaction Hydrolysis of Ala-|-Gly bond in repressor LexA.. In terms of biological role, represses a number of genes involved in the response to DNA damage (SOS response), including recA and lexA. Binds to the 16 bp palindromic sequence 5'-CTGTATATATATACAG-3'. In the presence of single-stranded DNA, RecA interacts with LexA causing an autocatalytic cleavage which disrupts the DNA-binding part of LexA, leading to derepression of the SOS regulon and eventually DNA repair. The chain is LexA repressor from Serratia proteamaculans (strain 568).